The following is a 119-amino-acid chain: Lamprin 1.8-10 (119 aa).

The signal sequence occupies residues 1-19 (MAATMQALLVIALLHLATA). 7 consecutive repeat copies span residues 41–45 (GGLGY), 46–50 (GGLGY), 51–55 (GGLGY), 56–60 (GGLGV), 61–65 (AGLGY), 66–70 (GGLGY), and 86–90 (GGLGY). Positions 41–90 (GGLGYGGLGYGGLGYGGLGVAGLGYGGLGYPGAALGGAYTHHAALGGLGY) are 7 X 5 AA approximate repeats.

As to quaternary structure, the polymeric lamprin chains self-aggregate to form fibers and have secondary structures particularly rich in beta-sheets and in beta-turns.

It is found in the secreted. It localises to the extracellular space. The protein resides in the extracellular matrix. Functionally, self-aggregating protein that is part of the soluble form of lamprin. This is Lamprin 1.8-10 from Petromyzon marinus (Sea lamprey).